Consider the following 117-residue polypeptide: Large ribosomal subunit protein uL18 (117 aa).

Belongs to the universal ribosomal protein uL18 family. As to quaternary structure, part of the 50S ribosomal subunit; part of the 5S rRNA/L5/L18/L25 subcomplex. Contacts the 5S and 23S rRNAs.

In terms of biological role, this is one of the proteins that bind and probably mediate the attachment of the 5S RNA into the large ribosomal subunit, where it forms part of the central protuberance. This chain is Large ribosomal subunit protein uL18, found in Francisella philomiragia subsp. philomiragia (strain ATCC 25017 / CCUG 19701 / FSC 153 / O#319-036).